The chain runs to 668 residues: tRNA 5-methylaminomethyl-2-thiouridine biosynthesis bifunctional protein MnmC (668 aa).

Residues 1–245 are tRNA (mnm(5)s(2)U34)-methyltransferase; sequence MKHYSIQPAN…KREMLCGVME (245 aa). Residues 270-668 form an FAD-dependent cmnm(5)s(2)U34 oxidoreductase region; sequence IGGGIASALL…LLKGKAVKAG (399 aa).

In the N-terminal section; belongs to the methyltransferase superfamily. tRNA (mnm(5)s(2)U34)-methyltransferase family. The protein in the C-terminal section; belongs to the DAO family. The cofactor is FAD.

It localises to the cytoplasm. It carries out the reaction 5-aminomethyl-2-thiouridine(34) in tRNA + S-adenosyl-L-methionine = 5-methylaminomethyl-2-thiouridine(34) in tRNA + S-adenosyl-L-homocysteine + H(+). Catalyzes the last two steps in the biosynthesis of 5-methylaminomethyl-2-thiouridine (mnm(5)s(2)U) at the wobble position (U34) in tRNA. Catalyzes the FAD-dependent demodification of cmnm(5)s(2)U34 to nm(5)s(2)U34, followed by the transfer of a methyl group from S-adenosyl-L-methionine to nm(5)s(2)U34, to form mnm(5)s(2)U34. This Escherichia coli O157:H7 protein is tRNA 5-methylaminomethyl-2-thiouridine biosynthesis bifunctional protein MnmC.